We begin with the raw amino-acid sequence, 251 residues long: 5-oxoprolinase subunit A (251 aa).

Belongs to the LamB/PxpA family. Forms a complex composed of PxpA, PxpB and PxpC.

It carries out the reaction 5-oxo-L-proline + ATP + 2 H2O = L-glutamate + ADP + phosphate + H(+). Functionally, catalyzes the cleavage of 5-oxoproline to form L-glutamate coupled to the hydrolysis of ATP to ADP and inorganic phosphate. The protein is 5-oxoprolinase subunit A of Vibrio parahaemolyticus serotype O3:K6 (strain RIMD 2210633).